Reading from the N-terminus, the 142-residue chain is Large ribosomal subunit protein uL13 (142 aa).

This sequence belongs to the universal ribosomal protein uL13 family. As to quaternary structure, part of the 50S ribosomal subunit.

In terms of biological role, this protein is one of the early assembly proteins of the 50S ribosomal subunit, although it is not seen to bind rRNA by itself. It is important during the early stages of 50S assembly. This Mannheimia succiniciproducens (strain KCTC 0769BP / MBEL55E) protein is Large ribosomal subunit protein uL13.